Consider the following 393-residue polypeptide: Formate-dependent phosphoribosylglycinamide formyltransferase (393 aa).

N(1)-(5-phospho-beta-D-ribosyl)glycinamide contacts are provided by residues 22–23 (EL) and Glu-82. ATP is bound by residues Arg-114, Lys-155, 160–165 (SSGKGQ), 195–198 (EGFV), and Glu-203. The 190-residue stretch at 119 to 308 (RLAAEELGLP…EFALHARAIL (190 aa)) folds into the ATP-grasp domain. Residues Glu-267 and Glu-279 each contribute to the Mg(2+) site. N(1)-(5-phospho-beta-D-ribosyl)glycinamide-binding positions include Asp-286, Lys-356, and 363–364 (RR).

This sequence belongs to the PurK/PurT family. Homodimer.

It catalyses the reaction N(1)-(5-phospho-beta-D-ribosyl)glycinamide + formate + ATP = N(2)-formyl-N(1)-(5-phospho-beta-D-ribosyl)glycinamide + ADP + phosphate + H(+). It functions in the pathway purine metabolism; IMP biosynthesis via de novo pathway; N(2)-formyl-N(1)-(5-phospho-D-ribosyl)glycinamide from N(1)-(5-phospho-D-ribosyl)glycinamide (formate route): step 1/1. Involved in the de novo purine biosynthesis. Catalyzes the transfer of formate to 5-phospho-ribosyl-glycinamide (GAR), producing 5-phospho-ribosyl-N-formylglycinamide (FGAR). Formate is provided by PurU via hydrolysis of 10-formyl-tetrahydrofolate. This chain is Formate-dependent phosphoribosylglycinamide formyltransferase, found in Nitratidesulfovibrio vulgaris (strain DSM 19637 / Miyazaki F) (Desulfovibrio vulgaris).